The following is a 309-amino-acid chain: Mitochondrial fission regulator 1-like (309 aa).

A disordered region spans residues 189 to 221; the sequence is DVTEEDEEEEEEEDREEEEEDVSELVPDPMPPV. Residues 190-211 are compositionally biased toward acidic residues; it reads VTEEDEEEEEEEDREEEEEDVS. The residue at position 253 (Ser253) is a Phosphoserine.

The protein belongs to the MTFR1 family.

The protein localises to the mitochondrion outer membrane. Its function is as follows. Mitochondrial protein required for adaptation of miochondrial dynamics to metabolic changes. Regulates mitochondrial morphology at steady state and mediates AMPK-dependent stress-induced mitochondrial fragmentation via the control of OPA1 levels. In Danio rerio (Zebrafish), this protein is Mitochondrial fission regulator 1-like (mtfr1l).